The following is a 129-amino-acid chain: MTTEYIGEIVISPRVLEVITGIATTQVEGVHSLHNKKMADSFNKASLGKGVYLQTEEDGSVTADIYVYLQYGVKVPTVSMNIQKTVKSAVYDMAEVPISAVNIHVEGIVAEKTPKPDLKSLFDEDFLDD.

This is an uncharacterized protein from Streptococcus pyogenes serotype M6 (strain ATCC BAA-946 / MGAS10394).